The sequence spans 496 residues: Glutamyl-tRNA(Gln) amidotransferase subunit A (496 aa).

Active-site charge relay system residues include Lys75 and Ser150. Ser174 functions as the Acyl-ester intermediate in the catalytic mechanism.

This sequence belongs to the amidase family. GatA subfamily. As to quaternary structure, heterotrimer of A, B and C subunits.

The enzyme catalyses L-glutamyl-tRNA(Gln) + L-glutamine + ATP + H2O = L-glutaminyl-tRNA(Gln) + L-glutamate + ADP + phosphate + H(+). Allows the formation of correctly charged Gln-tRNA(Gln) through the transamidation of misacylated Glu-tRNA(Gln) in organisms which lack glutaminyl-tRNA synthetase. The reaction takes place in the presence of glutamine and ATP through an activated gamma-phospho-Glu-tRNA(Gln). The chain is Glutamyl-tRNA(Gln) amidotransferase subunit A from Burkholderia ambifaria (strain MC40-6).